Reading from the N-terminus, the 246-residue chain is MQFLVDTHTHTISSGHAYSTVLENAAAASQRGLEMFCVTDHAPTMPGAPHFWHFANQRVIPRLLHGVAVLRGVEANILNIEGEIDLDERIINQLDWVMASFHEPVFRYTNKSDHTQALLNVIRSGRVDAIGHPGNPNYDFDFESVFKEAAKHNVVMEINNSSLSGSRVGSEIRCEDIAMYIKEIGGRITTGSDAHFAADVGNFESVEPLLKKVNFPIESIITRHSRSFLDFLEERGKKAISELAHL.

The Zn(2+) site is built by His-8, His-10, His-16, His-41, Glu-74, His-102, His-132, Asp-193, and His-195.

It belongs to the PHP family. Requires Zn(2+) as cofactor.

This chain is Probable phosphatase PBPRB2022, found in Photobacterium profundum (strain SS9).